Reading from the N-terminus, the 416-residue chain is Ribulose bisphosphate carboxylase large chain (416 aa).

Substrate is bound by residues Asn102 and Thr152. Lys154 functions as the Proton acceptor in the catalytic mechanism. Position 156 (Lys156) interacts with substrate. Mg(2+) is bound by residues Lys180, Asp182, and Glu183. Lys180 is subject to N6-carboxylysine. His273 functions as the Proton acceptor in the catalytic mechanism. 3 residues coordinate substrate: Arg274, His306, and Ser358.

Belongs to the RuBisCO large chain family. Type I subfamily. As to quaternary structure, heterohexadecamer of 8 large chains and 8 small chains; disulfide-linked. The disulfide link is formed within the large subunit homodimers. The cofactor is Mg(2+). The disulfide bond which can form in the large chain dimeric partners within the hexadecamer appears to be associated with oxidative stress and protein turnover.

The protein localises to the plastid. The protein resides in the chloroplast. The catalysed reaction is 2 (2R)-3-phosphoglycerate + 2 H(+) = D-ribulose 1,5-bisphosphate + CO2 + H2O. It carries out the reaction D-ribulose 1,5-bisphosphate + O2 = 2-phosphoglycolate + (2R)-3-phosphoglycerate + 2 H(+). In terms of biological role, ruBisCO catalyzes two reactions: the carboxylation of D-ribulose 1,5-bisphosphate, the primary event in carbon dioxide fixation, as well as the oxidative fragmentation of the pentose substrate in the photorespiration process. Both reactions occur simultaneously and in competition at the same active site. The sequence is that of Ribulose bisphosphate carboxylase large chain (rbcL) from Arthropteris beckleri (Fern).